Consider the following 556-residue polypeptide: Single-strand DNA-binding protein (556 aa).

Disordered stretches follow at residues methionine 1–glutamate 95 and phenylalanine 527–leucine 556. Polar residues-rich tracts occupy residues glutamate 10 to phenylalanine 25 and valine 36 to glutamate 51. Basic and acidic residues-rich tracts occupy residues threonine 52 to alanine 73 and aspartate 539 to proline 548.

As to quaternary structure, interacts with host VIP2 that promotes T-DNA integration into the host genome. Forms a complex made of virE2 and host proteins VIP1 and VBF. Forms heterodimers with the chaperone protein virE1 that prevent virE2 anarchic homopolymerization. Interacts with A.thaliana VIP1 that mediates its translocation to the host nucleus. Forms a complex made of VirE2, host VIP1 and VIP2 and single-stranded DNA (ssDNA).

It is found in the secreted. The protein localises to the host nucleus. Its function is as follows. Involved in DNA transformation; mediates the nuclear uptake of single-stranded DNA copies of the transferred DNA (T-DNA) element. Binds single-stranded but not double-stranded DNA regardless of nucleotide sequence composition. In Agrobacterium fabrum (strain C58 / ATCC 33970) (Agrobacterium tumefaciens (strain C58)), this protein is Single-strand DNA-binding protein (virE2).